The chain runs to 284 residues: Pantothenate synthetase (284 aa).

30-37 (MGNLHDGH) lines the ATP pocket. His37 functions as the Proton donor in the catalytic mechanism. Position 61 (Gln61) interacts with (R)-pantoate. A beta-alanine-binding site is contributed by Gln61. Position 149 to 152 (149 to 152 (GEKD)) interacts with ATP. Gln155 contacts (R)-pantoate. ATP is bound by residues Val178 and 186 to 189 (LSSR).

This sequence belongs to the pantothenate synthetase family. Homodimer.

It is found in the cytoplasm. It carries out the reaction (R)-pantoate + beta-alanine + ATP = (R)-pantothenate + AMP + diphosphate + H(+). It functions in the pathway cofactor biosynthesis; (R)-pantothenate biosynthesis; (R)-pantothenate from (R)-pantoate and beta-alanine: step 1/1. Catalyzes the condensation of pantoate with beta-alanine in an ATP-dependent reaction via a pantoyl-adenylate intermediate. The chain is Pantothenate synthetase from Cronobacter sakazakii (strain ATCC BAA-894) (Enterobacter sakazakii).